The chain runs to 353 residues: Tetrahedral aminopeptidase (353 aa).

Residues histidine 68 and aspartate 182 each coordinate Zn(2+). Residue glutamate 212 is the Proton acceptor of the active site. 3 residues coordinate Zn(2+): glutamate 213, aspartate 235, and histidine 323.

It belongs to the peptidase M42 family. In terms of assembly, homododecamer. The assembly of six dimers results in a tetrahedral-shaped structure; all 12 active sites are located on the inside of the tetrahedron. Substrate access is granted by four pores with a maximal diameter of 18 Angstroms, allowing only small peptides and unfolded proteins access to the active site. Beside the four entry ports, TET contains 12 small product release openings, which are large enough to allow passage of only single amino acid residues. Requires Zn(2+) as cofactor. The cofactor is Co(2+).

Its activity is regulated as follows. Inhibited by EDTA and bestatin in vitro. Is insensitive to papain, antipain, chymostatin, leupeptin, pepstatin and aprotinin. In terms of biological role, functions as an aminopeptidase, with a clear preference for leucine as the N-terminal amino acid. However, can also cleave moderately long polypeptide substrates of various compositions in a fairly unspecific manner. Has neither carboxypeptidase nor endoproteolytic activities, and it is devoid of N-terminal deblocking activity. Is involved in protein degradation, performing degradation of oligopeptides produced by the proteasome into single amino acids. In Pyrococcus horikoshii (strain ATCC 700860 / DSM 12428 / JCM 9974 / NBRC 100139 / OT-3), this protein is Tetrahedral aminopeptidase (frvX).